Here is a 317-residue protein sequence, read N- to C-terminus: Xylose/arabinose import permease protein XacH (317 aa).

Transmembrane regions (helical) follow at residues 40–60 (GIPF…NFAI), 98–118 (LVLL…LAIL), 132–152 (VYLL…LWMF), 179–199 (IALG…TMVV), 241–261 (AAVV…ALVG), and 290–310 (AAIA…YLYY). In terms of domain architecture, ABC transmembrane type-1 spans 94–309 (AQNNLVLLVG…ALGVIGPYLY (216 aa)).

This sequence belongs to the binding-protein-dependent transport system permease family. As to quaternary structure, the complex is composed of two ATP-binding proteins (XacJ and XacK), two transmembrane proteins (XacH and XacI) and a solute-binding protein (XacG).

The protein resides in the cell membrane. In terms of biological role, part of the ABC transporter complex XacGHIJK involved in the uptake of xylose and arabinose. Responsible for the translocation of the substrate across the membrane. This chain is Xylose/arabinose import permease protein XacH, found in Haloferax volcanii (strain ATCC 29605 / DSM 3757 / JCM 8879 / NBRC 14742 / NCIMB 2012 / VKM B-1768 / DS2) (Halobacterium volcanii).